A 758-amino-acid chain; its full sequence is Dolichyl-phosphooligosaccharide-protein glycotransferase 2 (758 aa).

The Cytoplasmic portion of the chain corresponds to 1–6 (MKRRYS). A helical membrane pass occupies residues 7-27 (ILIILLVAIFYRMITFRFKYL). Residues 28–92 (LGYDPYFHLA…KVFGVSLTTT (65 aa)) are Extracellular-facing. The DXD motif 1 motif lies at 29–31 (GYD). Aspartate 31 contacts Mn(2+). Residues 93-113 (FKITPVIFGVLTVIFLYLSLL) form a helical membrane-spanning segment. At 114 to 120 (KLYDEKR) the chain is on the cytoplasmic side. The helical transmembrane segment at 121–141 (AFFGGFFLAISYGHVFRSMAN) threads the bilayer. Over 142–145 (YYRG) the chain is Extracellular. Positions 144 and 146 each coordinate Mn(2+). The short motif at 144-146 (RGD) is the DXD motif 2 element. Residues 146–166 (DNYMLFWYSVALLGISLALGI) traverse the membrane as a helical segment. Residues 167–175 (KKGKWKYKR) are Cytoplasmic-facing. A run of 2 helical transmembrane segments spans residues 176–196 (LIFY…WQAY) and 197–217 (YPIF…AFIL). The Cytoplasmic portion of the chain corresponds to 218 to 226 (KKDKYLLDS). A helical membrane pass occupies residues 227-247 (IILILSTAFGVLLANYLGGIF). The Extracellular segment spans residues 248–281 (GYGMLGYAKWLGKSVAKKLGLEFGYLKDVYLILH). A helical transmembrane segment spans residues 282–302 (LKYLVPISLSFVLVLILLGFL). At 303–310 (TKDIRIRS) the chain is on the cytoplasmic side. A helical membrane pass occupies residues 311-331 (LFLGIASFIGIIILFKRFEAL). The Extracellular portion of the chain corresponds to 332 to 352 (KELSTGFGIFKEAPILETQPT). Positions 340 to 343 (IFKE) match the TIXE motif motif. The helical transmembrane segment at 353–373 (SFKDLWAAFSLSFFLTPLFFI) threads the bilayer. Over 374–379 (RFKKPR) the chain is Cytoplasmic. A helical transmembrane segment spans residues 380–400 (VEDFLTLGLIIPSVYMLKTWT). Arginine 401 is a topological domain (extracellular). Arginine 401 provides a ligand contact to a glycophospholipid. The chain crosses the membrane as a helical span at residues 402 to 422 (FLFIGSMAIAIMSGIGIVELY). The Cytoplasmic segment spans residues 423-433 (EAIKPRLNGKK). Residues 434–454 (ALATGIITLVILPGVIAGLSF) form a helical membrane-spanning segment. Topologically, residues 455–758 (KEVCSLHPEM…DRGVFRLSYN (304 aa)) are extracellular. The interacts with target acceptor peptide in protein substrate stretch occupies residues 488-490 (WWD). The WWDYG motif signature appears at 488 to 492 (WWDWG). The short motif at 540–547 (DFLKFGAI) is the DK motif element.

Belongs to the STT3 family. Mn(2+) is required as a cofactor. It depends on Mg(2+) as a cofactor.

The protein resides in the cell membrane. It catalyses the reaction an archaeal dolichyl phosphooligosaccharide + [protein]-L-asparagine = an archaeal dolichyl phosphate + a glycoprotein with the oligosaccharide chain attached by N-beta-D-glycosyl linkage to a protein L-asparagine.. Its pathway is protein modification; protein glycosylation. Its function is as follows. Oligosaccharyl transferase (OST) that catalyzes the initial transfer of a defined glycan (ManNAcXyl(2)GlcAMan(2)GalNAc in Pyrococcus) from the lipid carrier dolichol-monophosphate to an asparagine residue within an Asn-X-Ser/Thr consensus motif in nascent polypeptide chains, the first step in protein N-glycosylation. The protein is Dolichyl-phosphooligosaccharide-protein glycotransferase 2 (aglB2) of Pyrococcus horikoshii (strain ATCC 700860 / DSM 12428 / JCM 9974 / NBRC 100139 / OT-3).